A 570-amino-acid polypeptide reads, in one-letter code: Formate--tetrahydrofolate ligase (570 aa).

65 to 72 (TPFGEGKT) is a binding site for ATP.

The protein belongs to the formate--tetrahydrofolate ligase family.

The enzyme catalyses (6S)-5,6,7,8-tetrahydrofolate + formate + ATP = (6R)-10-formyltetrahydrofolate + ADP + phosphate. The protein operates within one-carbon metabolism; tetrahydrofolate interconversion. The protein is Formate--tetrahydrofolate ligase of Shewanella halifaxensis (strain HAW-EB4).